The following is a 749-amino-acid chain: Formate acetyltransferase (749 aa).

The PFL domain occupies Glu3–Lys619. The active-site S-acetylcysteine intermediate is the Cys413. Cys414 (cysteine radical intermediate) is an active-site residue. One can recognise a Glycine radical domain in the interval Pro626–Met749. A Glycine radical modification is found at Gly724.

Belongs to the glycyl radical enzyme (GRE) family. PFL subfamily. Homodimer.

It is found in the cytoplasm. The enzyme catalyses formate + acetyl-CoA = pyruvate + CoA. The protein operates within fermentation; pyruvate fermentation; formate from pyruvate: step 1/1. Functionally, catalyzes the conversion of pyruvate to formate and acetyl-CoA. The sequence is that of Formate acetyltransferase (pflB) from Staphylococcus aureus (strain USA300).